Here is a 201-residue protein sequence, read N- to C-terminus: Recombination protein RecR (201 aa).

Residues C57–C72 form a C4-type zinc finger. Residues G81–P176 enclose the Toprim domain.

It belongs to the RecR family.

May play a role in DNA repair. It seems to be involved in an RecBC-independent recombinational process of DNA repair. It may act with RecF and RecO. The chain is Recombination protein RecR from Salmonella arizonae (strain ATCC BAA-731 / CDC346-86 / RSK2980).